Consider the following 311-residue polypeptide: Arginine/serine-rich protein 1 (311 aa).

Positions 1–125 (MSTYVNDMWP…RSRSRSRGRS (125 aa)) are disordered. Ser12 is subject to Phosphoserine. Residues 20–31 (STSRSGGSSRLS) are compositionally biased toward low complexity. The segment covering 32-123 (SRSRSRSFSR…RSRSRSRSRG (92 aa)) has biased composition (basic residues). 2 positions are modified to phosphoserine: Ser109 and Ser111. Omega-N-methylarginine is present on Arg135.

The protein belongs to the RSRP family. In terms of processing, phosphorylated. Phosphorylation at Ser-109 and Ser-111 mediates the interaction with spliceosome proteins.

Its subcellular location is the nucleus. Probably acts as a spliceosomal factor that contributes to spliceosome assembly and regulates the isoform switching of proteins such as PARP6. The polypeptide is Arginine/serine-rich protein 1 (RSRP1) (Pongo abelii (Sumatran orangutan)).